The primary structure comprises 421 residues: D-amino acid dehydrogenase (421 aa).

3 to 17 is an FAD binding site; that stretch reads VIVLGSGVIGVASAY.

Belongs to the DadA oxidoreductase family. Requires FAD as cofactor.

It catalyses the reaction a D-alpha-amino acid + A + H2O = a 2-oxocarboxylate + AH2 + NH4(+). The protein operates within amino-acid degradation; D-alanine degradation; NH(3) and pyruvate from D-alanine: step 1/1. Its function is as follows. Oxidative deamination of D-amino acids. This is D-amino acid dehydrogenase from Acinetobacter baumannii (strain AB307-0294).